We begin with the raw amino-acid sequence, 246 residues long: tRNA pseudouridine synthase A (246 aa).

Asp-52 functions as the Nucleophile in the catalytic mechanism. Tyr-111 is a binding site for substrate.

Belongs to the tRNA pseudouridine synthase TruA family. Homodimer.

It carries out the reaction uridine(38/39/40) in tRNA = pseudouridine(38/39/40) in tRNA. Functionally, formation of pseudouridine at positions 38, 39 and 40 in the anticodon stem and loop of transfer RNAs. This chain is tRNA pseudouridine synthase A, found in Parvibaculum lavamentivorans (strain DS-1 / DSM 13023 / NCIMB 13966).